The chain runs to 450 residues: Enolase (450 aa).

A (2R)-2-phosphoglycerate-binding site is contributed by Gln-167. Glu-209 acts as the Proton donor in catalysis. Mg(2+) contacts are provided by Asp-250, Glu-307, and Asp-334. Positions 359, 388, 389, and 410 each coordinate (2R)-2-phosphoglycerate. Lys-359 functions as the Proton acceptor in the catalytic mechanism.

This sequence belongs to the enolase family. Mg(2+) serves as cofactor.

Its subcellular location is the cytoplasm. It localises to the secreted. The protein resides in the cell surface. It carries out the reaction (2R)-2-phosphoglycerate = phosphoenolpyruvate + H2O. It participates in carbohydrate degradation; glycolysis; pyruvate from D-glyceraldehyde 3-phosphate: step 4/5. Catalyzes the reversible conversion of 2-phosphoglycerate (2-PG) into phosphoenolpyruvate (PEP). It is essential for the degradation of carbohydrates via glycolysis. Its function is as follows. 'Moonlights' as a plasminogen receptor and plasmin activator. Contributes to host (pig) cell adhesion; anti-enolase antibodies decrease binding to porcine kidney cells about 60%. Binds host plasminogen and fibronectin in vitro; enhances the activity of host tissue-specific plasminogen activator (tPA), and helps plasminogen and tPA degrade articifial host extracellular matrices. In Mesomycoplasma hyorhinis (strain HUB-1) (Mycoplasma hyorhinis), this protein is Enolase.